A 72-amino-acid chain; its full sequence is Translation initiation factor IF-1 (72 aa).

One can recognise an S1-like domain in the interval 1–72 (MSKEEVLEFS…TKGRITYRYK (72 aa)).

The protein belongs to the IF-1 family. In terms of assembly, component of the 30S ribosomal translation pre-initiation complex which assembles on the 30S ribosome in the order IF-2 and IF-3, IF-1 and N-formylmethionyl-tRNA(fMet); mRNA recruitment can occur at any time during PIC assembly.

It localises to the cytoplasm. One of the essential components for the initiation of protein synthesis. Stabilizes the binding of IF-2 and IF-3 on the 30S subunit to which N-formylmethionyl-tRNA(fMet) subsequently binds. Helps modulate mRNA selection, yielding the 30S pre-initiation complex (PIC). Upon addition of the 50S ribosomal subunit IF-1, IF-2 and IF-3 are released leaving the mature 70S translation initiation complex. The protein is Translation initiation factor IF-1 of Bartonella quintana (strain Toulouse) (Rochalimaea quintana).